Reading from the N-terminus, the 171-residue chain is uncharacterized protein (171 aa).

This is an uncharacterized protein from Rhizobium etli.